The primary structure comprises 413 residues: uncharacterized protein (413 aa).

The next 7 helical transmembrane spans lie at 10–32, 162–184, 189–211, 232–254, 259–276, 288–310, and 325–347; these read GLTI…GRLP, VFLH…LVFL, LLPR…AFLV, LSFR…LFFF, YSYS…ILLV, ALMV…SFVT, and FAYA…SLIL.

It is found in the cell membrane. This is an uncharacterized protein from Aquifex aeolicus (strain VF5).